Consider the following 170-residue polypeptide: Protein SprT (170 aa).

Positions 22–163 (LQQANLTLQT…RCRRCGKTLR (142 aa)) constitute a SprT-like domain. His-78 provides a ligand contact to Zn(2+). The active site involves Glu-79. His-82 provides a ligand contact to Zn(2+).

Belongs to the SprT family. Zn(2+) is required as a cofactor.

The protein localises to the cytoplasm. This chain is Protein SprT, found in Pectobacterium carotovorum subsp. carotovorum (strain PC1).